A 456-amino-acid chain; its full sequence is Serine--tRNA ligase (456 aa).

Residues 49–69 (HERNEVSSTIGELKQAGEEEA) form a disordered region. 241-243 (TAE) is an L-serine binding site. Residues 272–274 (RQE) and V288 each bind ATP. E295 contributes to the L-serine binding site. ATP is bound at residue 368–371 (EVSS). Residue S404 coordinates L-serine.

It belongs to the class-II aminoacyl-tRNA synthetase family. Type-1 seryl-tRNA synthetase subfamily. In terms of assembly, homodimer. The tRNA molecule binds across the dimer.

Its subcellular location is the cytoplasm. The enzyme catalyses tRNA(Ser) + L-serine + ATP = L-seryl-tRNA(Ser) + AMP + diphosphate + H(+). It catalyses the reaction tRNA(Sec) + L-serine + ATP = L-seryl-tRNA(Sec) + AMP + diphosphate + H(+). Its pathway is aminoacyl-tRNA biosynthesis; selenocysteinyl-tRNA(Sec) biosynthesis; L-seryl-tRNA(Sec) from L-serine and tRNA(Sec): step 1/1. Catalyzes the attachment of serine to tRNA(Ser). Is also able to aminoacylate tRNA(Sec) with serine, to form the misacylated tRNA L-seryl-tRNA(Sec), which will be further converted into selenocysteinyl-tRNA(Sec). The chain is Serine--tRNA ligase from Halorubrum lacusprofundi (strain ATCC 49239 / DSM 5036 / JCM 8891 / ACAM 34).